The primary structure comprises 227 residues: Cytochrome c oxidase subunit 2 (227 aa).

Over 1-14 the chain is Mitochondrial intermembrane; sequence MAYPLQLGLQDATS. A helical membrane pass occupies residues 15-45; sequence PIMEELTSFHDHTLMIVFLISSLVLYIISSM. Topologically, residues 46-59 are mitochondrial matrix; it reads LTTKMTHTNTMDAQ. A helical transmembrane segment spans residues 60-87; that stretch reads GVETIWTILPAAILVLIALPSLRILYMM. Residues 88–227 are Mitochondrial intermembrane-facing; it reads DEINNPALTV…HFENWSASMI (140 aa). Residues H161, C196, E198, C200, H204, and M207 each coordinate Cu cation. E198 is a Mg(2+) binding site.

The protein belongs to the cytochrome c oxidase subunit 2 family. Component of the cytochrome c oxidase (complex IV, CIV), a multisubunit enzyme composed of 14 subunits. The complex is composed of a catalytic core of 3 subunits MT-CO1, MT-CO2 and MT-CO3, encoded in the mitochondrial DNA, and 11 supernumerary subunits COX4I, COX5A, COX5B, COX6A, COX6B, COX6C, COX7A, COX7B, COX7C, COX8 and NDUFA4, which are encoded in the nuclear genome. The complex exists as a monomer or a dimer and forms supercomplexes (SCs) in the inner mitochondrial membrane with NADH-ubiquinone oxidoreductase (complex I, CI) and ubiquinol-cytochrome c oxidoreductase (cytochrome b-c1 complex, complex III, CIII), resulting in different assemblies (supercomplex SCI(1)III(2)IV(1) and megacomplex MCI(2)III(2)IV(2)). Found in a complex with TMEM177, COA6, COX18, COX20, SCO1 and SCO2. Interacts with TMEM177 in a COX20-dependent manner. Interacts with COX20. Interacts with COX16. The cofactor is Cu cation.

The protein resides in the mitochondrion inner membrane. It catalyses the reaction 4 Fe(II)-[cytochrome c] + O2 + 8 H(+)(in) = 4 Fe(III)-[cytochrome c] + 2 H2O + 4 H(+)(out). Functionally, component of the cytochrome c oxidase, the last enzyme in the mitochondrial electron transport chain which drives oxidative phosphorylation. The respiratory chain contains 3 multisubunit complexes succinate dehydrogenase (complex II, CII), ubiquinol-cytochrome c oxidoreductase (cytochrome b-c1 complex, complex III, CIII) and cytochrome c oxidase (complex IV, CIV), that cooperate to transfer electrons derived from NADH and succinate to molecular oxygen, creating an electrochemical gradient over the inner membrane that drives transmembrane transport and the ATP synthase. Cytochrome c oxidase is the component of the respiratory chain that catalyzes the reduction of oxygen to water. Electrons originating from reduced cytochrome c in the intermembrane space (IMS) are transferred via the dinuclear copper A center (CU(A)) of subunit 2 and heme A of subunit 1 to the active site in subunit 1, a binuclear center (BNC) formed by heme A3 and copper B (CU(B)). The BNC reduces molecular oxygen to 2 water molecules using 4 electrons from cytochrome c in the IMS and 4 protons from the mitochondrial matrix. The chain is Cytochrome c oxidase subunit 2 (MT-CO2) from Acomys ignitus (Fiery spiny mouse).